The chain runs to 642 residues: Threonine--tRNA ligase (642 aa).

Residues Met-1–Thr-61 form the TGS domain. Positions Asp-243–Pro-534 are catalytic. Residues Cys-334, His-385, and His-511 each contribute to the Zn(2+) site.

Belongs to the class-II aminoacyl-tRNA synthetase family. As to quaternary structure, homodimer. It depends on Zn(2+) as a cofactor.

The protein localises to the cytoplasm. It catalyses the reaction tRNA(Thr) + L-threonine + ATP = L-threonyl-tRNA(Thr) + AMP + diphosphate + H(+). In terms of biological role, catalyzes the attachment of threonine to tRNA(Thr) in a two-step reaction: L-threonine is first activated by ATP to form Thr-AMP and then transferred to the acceptor end of tRNA(Thr). Also edits incorrectly charged L-seryl-tRNA(Thr). The chain is Threonine--tRNA ligase from Sodalis glossinidius (strain morsitans).